The following is a 300-amino-acid chain: 4-hydroxy-tetrahydrodipicolinate synthase (300 aa).

Position 45 (Thr45) interacts with pyruvate. The active-site Proton donor/acceptor is Tyr140. The active-site Schiff-base intermediate with substrate is Lys169. Ile210 lines the pyruvate pocket.

The protein belongs to the DapA family. As to quaternary structure, homotetramer; dimer of dimers.

Its subcellular location is the cytoplasm. It catalyses the reaction L-aspartate 4-semialdehyde + pyruvate = (2S,4S)-4-hydroxy-2,3,4,5-tetrahydrodipicolinate + H2O + H(+). Its pathway is amino-acid biosynthesis; L-lysine biosynthesis via DAP pathway; (S)-tetrahydrodipicolinate from L-aspartate: step 3/4. Catalyzes the condensation of (S)-aspartate-beta-semialdehyde [(S)-ASA] and pyruvate to 4-hydroxy-tetrahydrodipicolinate (HTPA). The chain is 4-hydroxy-tetrahydrodipicolinate synthase from Helicobacter pylori (strain G27).